We begin with the raw amino-acid sequence, 280 residues long: Elongation factor Ts (280 aa).

The involved in Mg(2+) ion dislocation from EF-Tu stretch occupies residues 82-85 (TDFV).

It belongs to the EF-Ts family.

It localises to the cytoplasm. Associates with the EF-Tu.GDP complex and induces the exchange of GDP to GTP. It remains bound to the aminoacyl-tRNA.EF-Tu.GTP complex up to the GTP hydrolysis stage on the ribosome. In Baumannia cicadellinicola subsp. Homalodisca coagulata, this protein is Elongation factor Ts.